The sequence spans 572 residues: MAAPRPSPAISVSVSAPAFYAPQKKFGPVVAPKPKVNPFRPGDSEPPPAPGAQRAQMGRVGEIPPPPPEDFPLPPPPLAGDGDDAEGALGGAFPPPPPPIEESFPPAPLEEEIFPSPPPPPEEEGGPEAPIPPPPQPREKVSSIDLEIDSLSSLLDDMTKNDPFKARVSSGYVPPPVATPFSSKSSTKPAAGGTAPLPPWKSPSSSQPLPQVPAPAQSQTQFHVQPQPQPKPQVQLHVQSQTQPVSLANTQPRGPPASSPAPAPKFSPVTPKFTPVASKFSPGAPGGSGSQPNQKLGHPEALSAGTGSPQPPSFTYAQQREKPRVQEKQHPVPPPAQNQNQVRSPGAPGPLTLKEVEELEQLTQQLMQDMEHPQRQNVAVNELCGRCHQPLARAQPAVRALGQLFHIACFTCHQCAQQLQGQQFYSLEGAPYCEGCYTDTLEKCNTCGEPITDRMLRATGKAYHPHCFTCVVCARPLEGTSFIVDQANRPHCVPDYHKQYAPRCSVCSEPIMPEPGRDETVRVVALDKNFHMKCYKCEDCGKPLSIEADDNGCFPLDGHVLCRKCHTARAQT.

Alanine 2 is modified (N-acetylalanine). The interval glutamine 23 to leucine 351 is disordered. Composition is skewed to pro residues over residues isoleucine 63–leucine 78 and phenylalanine 93–proline 108. Serine 116, serine 142, serine 143, serine 169, and serine 170 each carry phosphoserine. The span at serine 143 to aspartate 156 shows a compositional bias: low complexity. Phosphothreonine is present on threonine 179. Over residues serine 202 to glutamine 239 the composition is skewed to low complexity. Positions serine 240 to proline 252 are enriched in polar residues. Asymmetric dimethylarginine is present on arginine 253. Residues arginine 253 to lysine 265 show a composition bias toward pro residues. Position 259 is a phosphoserine (serine 259). Lysine 265 is modified (N6-acetyllysine). A Phosphoserine modification is found at serine 267. The residue at position 270 (threonine 270) is a Phosphothreonine. Lysine 272 is subject to N6-acetyllysine. Residue threonine 274 is modified to Phosphothreonine. An N6-acetyllysine modification is found at lysine 279. Residues serine 281, serine 288, and serine 308 each carry the phosphoserine modification. Over residues glycine 305–glutamine 318 the composition is skewed to polar residues. Residues glutamine 319–histidine 330 show a composition bias toward basic and acidic residues. Serine 344 carries the phosphoserine modification. LIM zinc-binding domains lie at cysteine 384–lysine 443, cysteine 444–arginine 503, and cysteine 504–alanine 570.

The protein belongs to the zyxin/ajuba family. Interacts with HPV type 6 protein E6. Does not interact significantly with E6 proteins from HPV types 11, 16, or 18. Interacts, via the Pro-rich regions, with the EVH1 domains of ENAH, EVL and VASP. Interacts with the first LIM domain of TES. Interacts with NEBL (isoform 2). Interacts with SYNPO2. As to quaternary structure, (Microbial infection) Interacts with human papillomavirus type 6/HPV6 protein E6. Does not interact significantly with E6 proteins from HPV types 11, 16, or 18.

It is found in the cytoplasm. It localises to the cytoskeleton. The protein localises to the nucleus. Its subcellular location is the cell junction. The protein resides in the focal adhesion. Functionally, adhesion plaque protein. Binds alpha-actinin and the CRP protein. Important for targeting TES and ENA/VASP family members to focal adhesions and for the formation of actin-rich structures. May be a component of a signal transduction pathway that mediates adhesion-stimulated changes in gene expression. In Homo sapiens (Human), this protein is Zyxin (ZYX).